A 104-amino-acid polypeptide reads, in one-letter code: Large ribosomal subunit protein bL21 (104 aa).

Belongs to the bacterial ribosomal protein bL21 family. In terms of assembly, part of the 50S ribosomal subunit. Contacts protein L20.

Its function is as follows. This protein binds to 23S rRNA in the presence of protein L20. This is Large ribosomal subunit protein bL21 from Streptococcus thermophilus (strain ATCC BAA-491 / LMD-9).